Here is a 131-residue protein sequence, read N- to C-terminus: Encapsulated ferritin-like protein (131 aa).

The Fe cation site is built by Glu-30, Glu-60, and His-63. The disordered stretch occupies residues 96 to 131; the sequence is EEEDTGSSSSVAASPTSAPSHGSLGIGSLRQEGKED. Positions 98–131 are targeting peptide; it reads EDTGSSSSVAASPTSAPSHGSLGIGSLRQEGKED. The span at 102–115 shows a compositional bias: low complexity; sequence SSSSVAASPTSAPS.

Belongs to the ferritin-like superfamily. EncFtn family. Forms dimers at all pH tested; under acidic conditions formes decamers. The N-terminal domain (residues 1-97) crystallizes as a decameric ring. Four decamers are loaded in the encapsulin nanocompartment in a tetrahedral arrangement. A 3 nm gap is consistently seen between the shell and the cargo. The target peptide extends away from the decameric ring, to allow binding to the interior of the encapsulin nanocompartment shell.

It localises to the encapsulin nanocompartment. It carries out the reaction 4 Fe(2+) + O2 + 4 H(+) = 4 Fe(3+) + 2 H2O. The ferroxidase activity is inhibited by zinc. Its function is as follows. Cargo protein of a type 1 encapsulin nanocompartment. A ferritin-like ferroxidase that converts Fe(2+) to Fe(3+) iron inside the encapsulin nanocompartment. Mineralized Fe(3+) is released to the exterior of the decameric complex for deposition in the encapsulin nanocompartment. In solution the decamer binds 10-15 iron cations; in the encapsulin nanocompartment the decamer can bind up to 48 ions, perhaps via its internal channel, and on its exterior. The cargo-loaded nanocompartment maximally sequesters up to 4150 Fe ions. This is Encapsulated ferritin-like protein from Haliangium ochraceum (strain DSM 14365 / JCM 11303 / SMP-2).